Consider the following 325-residue polypeptide: Elongation factor P--(R)-beta-lysine ligase (325 aa).

Residue 76–78 coordinates substrate; that stretch reads SPE. ATP contacts are provided by residues 100-102 and asparagine 109; that span reads RNE. Tyrosine 118 lines the substrate pocket. 244 to 245 provides a ligand contact to ATP; sequence EL. Glutamate 251 provides a ligand contact to substrate. Glycine 300 contacts ATP.

It belongs to the class-II aminoacyl-tRNA synthetase family. EpmA subfamily. In terms of assembly, homodimer.

The enzyme catalyses D-beta-lysine + L-lysyl-[protein] + ATP = N(6)-((3R)-3,6-diaminohexanoyl)-L-lysyl-[protein] + AMP + diphosphate + H(+). With EpmB is involved in the beta-lysylation step of the post-translational modification of translation elongation factor P (EF-P) on 'Lys-34'. Catalyzes the ATP-dependent activation of (R)-beta-lysine produced by EpmB, forming a lysyl-adenylate, from which the beta-lysyl moiety is then transferred to the epsilon-amino group of EF-P 'Lys-34'. In Escherichia coli O139:H28 (strain E24377A / ETEC), this protein is Elongation factor P--(R)-beta-lysine ligase.